Here is a 434-residue protein sequence, read N- to C-terminus: Enolase (434 aa).

Residues His158 and Glu167 each coordinate substrate. Glu210 serves as the catalytic Proton donor. Asp245, Glu294, and Asp319 together coordinate Mg(2+). Substrate-binding residues include Glu294 and Asp319. Catalysis depends on Lys344, which acts as the Proton acceptor. Substrate contacts are provided by residues 371 to 374 (SHRS) and Lys395.

It belongs to the enolase family. In terms of assembly, homodimer. Requires Mg(2+) as cofactor.

It is found in the cytoplasm. The enzyme catalyses (2R)-2-phosphoglycerate = phosphoenolpyruvate + H2O. Its pathway is carbohydrate degradation; glycolysis; pyruvate from D-glyceraldehyde 3-phosphate: step 4/5. The protein is Enolase of Caenorhabditis elegans.